The following is a 211-amino-acid chain: Proline-rich 33 kDa extensin-related protein (211 aa).

Positions 1–14 (AILGVAIFAAPSLA) are cleaved as a signal peptide. Pro residues-rich tracts occupy residues 25–59 (PPVY…PVHK) and 82–93 (HKPPVYKPPVQK). The tract at residues 25 to 211 (PPVYTPPVHK…RHPPVENTGN (187 aa)) is disordered. Composition is skewed to basic residues over residues 101 to 111 (PVHKPPIHKPP) and 127 to 139 (PIHK…RPPV). Composition is skewed to basic and acidic residues over residues 142–159 (PPTE…EHKP) and 167–177 (KTEKPVPEHKP). Positions 179–198 (HLPPIVVRPPPTHKPNPPYG) are enriched in pro residues.

Belongs to the plant proline-rich protein superfamily. ENOD12 family.

The protein localises to the secreted. It is found in the cell wall. In Daucus carota (Wild carrot), this protein is Proline-rich 33 kDa extensin-related protein.